The sequence spans 591 residues: L-fucose isomerase (591 aa).

Catalysis depends on proton acceptor residues glutamate 337 and aspartate 361. 3 residues coordinate Mn(2+): glutamate 337, aspartate 361, and histidine 528.

This sequence belongs to the L-fucose isomerase family. As to quaternary structure, homohexamer. Mn(2+) is required as a cofactor.

Its subcellular location is the cytoplasm. The catalysed reaction is L-fucose = L-fuculose. It participates in carbohydrate degradation; L-fucose degradation; L-lactaldehyde and glycerone phosphate from L-fucose: step 1/3. Its function is as follows. Converts the aldose L-fucose into the corresponding ketose L-fuculose. The protein is L-fucose isomerase of Salmonella arizonae (strain ATCC BAA-731 / CDC346-86 / RSK2980).